A 669-amino-acid polypeptide reads, in one-letter code: DNA ligase (669 aa).

Residues 33 to 37 (DAEYD), 82 to 83 (SL), and Glu114 each bind NAD(+). Catalysis depends on Lys116, which acts as the N6-AMP-lysine intermediate. NAD(+) is bound by residues Arg137, Glu174, Lys291, and Lys315. Cys409, Cys412, Cys427, and Cys433 together coordinate Zn(2+). One can recognise a BRCT domain in the interval 593–669 (EIPQPLAGKV…QTEQDLLALL (77 aa)).

The protein belongs to the NAD-dependent DNA ligase family. LigA subfamily. Mg(2+) is required as a cofactor. Mn(2+) serves as cofactor.

The enzyme catalyses NAD(+) + (deoxyribonucleotide)n-3'-hydroxyl + 5'-phospho-(deoxyribonucleotide)m = (deoxyribonucleotide)n+m + AMP + beta-nicotinamide D-nucleotide.. Its function is as follows. DNA ligase that catalyzes the formation of phosphodiester linkages between 5'-phosphoryl and 3'-hydroxyl groups in double-stranded DNA using NAD as a coenzyme and as the energy source for the reaction. It is essential for DNA replication and repair of damaged DNA. In Vibrio vulnificus (strain YJ016), this protein is DNA ligase.